Reading from the N-terminus, the 713-residue chain is MQLLNFLICLFFIFKRCVFTVIGGEFSYDNIDKKPILVASYPEGSRFNVSASIKTLPDLVTLTFPKLVKDPGYVYEEAEKGDPESQFLIAMLYAMGPDERLGLSFPRNEPLSRIFLELSATQNYTYALLALAYKHLNGLSTPMSVDKGVELYKQVAHQISCLVQPLSHFAPDIAAEYPVDLYDLSRTSSYSVQKKDDIVEYLKDYALRGNNISAHISLATIYQYGTPGKLKDIKLAVKHYLAAIRLVNSGIPDSPSEAIKSIHNNPRHAPTTKETANSLSIAAFRLGCMALHGELGKPDPSLAYAWFEYGVSLNHSSSKAAIAYMYFMGYPVAENTESITKLLENALASNDPLAFAVAGKVSLANGQIDEATVHLIRAVSNGHLESVLHIADIYYGSNNQLSIAYYENFISRVLELFDVKTISFDPLTRHFAHRLSAELGNLMSQILAAKDRDPSTSYLKTVIFPTNEQTHRNARIAMNYYSRAAARNHIHSLIKIGDFYRMGLGTSAKPELAFSYYSQAAAIHPSALAYWRLGWMHEYGVGVPVDFEMAKKNYDNALMHDTRAFLAVTLARLRMRLSSPDSWFSNIYRILGKVTYKFLKLVQYFIINIFDILSPAGPDSQLPPEPPTLQVDRTPQQPDPQETSESLPSPNTEEMGESYNDIRFTYDYIDGRFLETACVTLIVVVVGLVLMRRHQQHRLQERRERIIRRQNRA.

Residues 1 to 20 form the signal peptide; it reads MQLLNFLICLFFIFKRCVFT. Asn48 and Asn123 each carry an N-linked (GlcNAc...) asparagine glycan. 2 Sel1-like repeats span residues 83–124 and 125–160; these read PESQ…TQNY and TYALLALAYKHLNGLSTPMSVDKGVELYKQVAHQIS. Asn211 carries an N-linked (GlcNAc...) asparagine glycan. Sel1-like repeat units lie at residues 212–248, 280–315, 490–525, and 527–562; these read ISAHISLATIYQYGTPGKLKDIKLAVKHYLAAIRLVN, SIAAFRLGCMALHGELGKPDPSLAYAWFEYGVSLNH, IHSLIKIGDFYRMGLGTSAKPELAFSYYSQAAAIHP, and ALAYWRLGWMHEYGVGVPVDFEMAKKNYDNALMHDT. An N-linked (GlcNAc...) asparagine glycan is attached at Asn314. Positions 621 to 655 are disordered; the sequence is QLPPEPPTLQVDRTPQQPDPQETSESLPSPNTEEM. Polar residues predominate over residues 631–652; it reads VDRTPQQPDPQETSESLPSPNT. The chain crosses the membrane as a helical span at residues 671–691; it reads GRFLETACVTLIVVVVGLVLM.

This sequence belongs to the sel-1 family.

It is found in the endoplasmic reticulum membrane. Component of the endoplasmic reticulum quality control (ERQC) system involved in ubiquitin-dependent degradation of missfolded endoplasmic reticulum proteins. This Schizosaccharomyces pombe (strain 972 / ATCC 24843) (Fission yeast) protein is Putative ERAD-associated E3 ubiquitin-protein ligase component.